Reading from the N-terminus, the 273-residue chain is Outer surface protein A (273 aa).

The first 16 residues, 1 to 16 (MKKYLLGIGLILALIA), serve as a signal peptide directing secretion. Residue Cys-17 is the site of N-palmitoyl cysteine attachment. Cys-17 is lipidated: S-diacylglycerol cysteine.

The protein belongs to the OspA lipoprotein family.

It is found in the cell outer membrane. The protein resides in the cell surface. The polypeptide is Outer surface protein A (Borreliella burgdorferi (Lyme disease spirochete)).